Reading from the N-terminus, the 354-residue chain is uncharacterized protein (354 aa).

Helical transmembrane passes span 9–29 (MGKI…LIFS), 31–51 (ISIN…ISFT), 76–96 (NFGI…LIWV), 109–129 (FLNV…AIVV), 144–164 (IIFS…VLLI), 185–205 (GILV…ALGV), 278–298 (YGTL…GFFY), 306–326 (GIYL…IESG), and 327–347 (ILDI…IYAI).

The protein resides in the cell membrane. This is an uncharacterized protein from Methanocaldococcus jannaschii (strain ATCC 43067 / DSM 2661 / JAL-1 / JCM 10045 / NBRC 100440) (Methanococcus jannaschii).